Reading from the N-terminus, the 546-residue chain is Probable protein kinase UbiB (546 aa).

The 379-residue stretch at 124–502 folds into the Protein kinase domain; sequence DFDIKPLASA…RVRQGQSRYL (379 aa). Residues 130-138 and Lys-153 contribute to the ATP site; that span reads LASASIAQV. Residue Asp-288 is the Proton acceptor of the active site. 2 helical membrane-spanning segments follow: residues 501 to 521 and 522 to 542; these read YLFG…INRP and DWQM…LIGW.

The protein belongs to the ABC1 family. UbiB subfamily.

It localises to the cell inner membrane. It functions in the pathway cofactor biosynthesis; ubiquinone biosynthesis [regulation]. Is probably a protein kinase regulator of UbiI activity which is involved in aerobic coenzyme Q (ubiquinone) biosynthesis. The chain is Probable protein kinase UbiB from Enterobacter sp. (strain 638).